The sequence spans 642 residues: Myrosinase-binding protein 2 (642 aa).

Jacalin-type lectin domains lie at 2-151, 156-291, 334-477, and 490-633; these read SEKV…HFFA, LKHF…HFAP, PNKV…YFAP, and SKKL…HAVP. The segment covering 296–334 has biased composition (pro residues); the sequence is TPAPAPAPAPAPAPAPSPAPASAPVPAPAPTPAPAPAPP. Disordered regions lie at residues 296 to 338 and 479 to 499; these read TPAP…NKVE and TNST…RGGN. Positions 479-490 are enriched in low complexity; that stretch reads TNSTTPSTPSTS.

This sequence belongs to the jacalin lectin family. As to expression, expressed in flowers. Detected mainly in ovules and styles of immature flowers, but also in pistils, styles, stamens, petals and embryos. Not detected in leaves.

This chain is Myrosinase-binding protein 2 (F-ATMBP), found in Arabidopsis thaliana (Mouse-ear cress).